We begin with the raw amino-acid sequence, 284 residues long: Pantothenate synthetase (284 aa).

Position 30-37 (30-37 (MGNLHDGH)) interacts with ATP. His37 functions as the Proton donor in the catalytic mechanism. Residue Gln61 participates in (R)-pantoate binding. Position 61 (Gln61) interacts with beta-alanine. Position 149–152 (149–152 (GEKD)) interacts with ATP. Gln155 is a (R)-pantoate binding site. Residues Val178 and 186-189 (LSSR) contribute to the ATP site.

This sequence belongs to the pantothenate synthetase family. In terms of assembly, homodimer.

Its subcellular location is the cytoplasm. It catalyses the reaction (R)-pantoate + beta-alanine + ATP = (R)-pantothenate + AMP + diphosphate + H(+). The protein operates within cofactor biosynthesis; (R)-pantothenate biosynthesis; (R)-pantothenate from (R)-pantoate and beta-alanine: step 1/1. Catalyzes the condensation of pantoate with beta-alanine in an ATP-dependent reaction via a pantoyl-adenylate intermediate. The chain is Pantothenate synthetase from Klebsiella pneumoniae subsp. pneumoniae (strain ATCC 700721 / MGH 78578).